The following is a 285-amino-acid chain: 1,4-dihydroxy-2-naphthoyl-CoA synthase (285 aa).

Residues Arg-45, 84-89, Tyr-97, 129-133, Thr-155, Ser-161, Tyr-258, and Lys-273 contribute to the substrate site; these read SGGDQK and YSIGG. Hydrogencarbonate is bound at residue 154-156; sequence QTG.

It belongs to the enoyl-CoA hydratase/isomerase family. MenB subfamily. In terms of assembly, homohexamer. Dimer of a homotrimer. Requires hydrogencarbonate as cofactor.

The catalysed reaction is 2-succinylbenzoyl-CoA + H(+) = 1,4-dihydroxy-2-naphthoyl-CoA + H2O. The protein operates within quinol/quinone metabolism; 1,4-dihydroxy-2-naphthoate biosynthesis; 1,4-dihydroxy-2-naphthoate from chorismate: step 6/7. It functions in the pathway quinol/quinone metabolism; menaquinone biosynthesis. Its activity is regulated as follows. Inhibited by sulfite and nitrate. Functionally, converts o-succinylbenzoyl-CoA (OSB-CoA) to 1,4-dihydroxy-2-naphthoyl-CoA (DHNA-CoA). This chain is 1,4-dihydroxy-2-naphthoyl-CoA synthase, found in Escherichia coli (strain K12).